Reading from the N-terminus, the 609-residue chain is Phosphoenolpyruvate carboxykinase [GTP] (609 aa).

Substrate is bound by residues Arg-81 and 220 to 222 (YGG). Mn(2+) is bound by residues Lys-229 and His-249. Ser-271 is a binding site for substrate. 272 to 277 (ACGKTN) is a GTP binding site. Residue Cys-273 is part of the active site. Asp-296 contributes to the Mn(2+) binding site. 387-389 (NSR) contributes to the substrate binding site. Residues Arg-389, Arg-420, and 515–518 (FGEN) each bind GTP.

It belongs to the phosphoenolpyruvate carboxykinase [GTP] family. In terms of assembly, monomer. Mn(2+) serves as cofactor.

The protein localises to the cytoplasm. It carries out the reaction oxaloacetate + GTP = phosphoenolpyruvate + GDP + CO2. It participates in carbohydrate biosynthesis; gluconeogenesis. In terms of biological role, catalyzes the conversion of oxaloacetate (OAA) to phosphoenolpyruvate (PEP), the rate-limiting step in the metabolic pathway that produces glucose from lactate and other precursors derived from the citric acid cycle. The chain is Phosphoenolpyruvate carboxykinase [GTP] from Mycobacterium marinum (strain ATCC BAA-535 / M).